We begin with the raw amino-acid sequence, 339 residues long: Ribosome biogenesis protein BRX1 homolog (339 aa).

The interval 1–34 (MSAYKRKRGSLPEVATNTKKAKKQLAGSEQEATA) is disordered. The Brix domain occupies 53–242 (ERVLIFSSRG…LIKIFKGSFG (190 aa)). The segment at 304–339 (AEEKPQVIETEPPAPKPKMKRKDKQFKRQRMAKKRM) is disordered. The span at 320–339 (PKMKRKDKQFKRQRMAKKRM) shows a compositional bias: basic residues.

It belongs to the BRX1 family. Ubiquitous.

Its subcellular location is the nucleus. It localises to the nucleolus. In terms of biological role, required for biogenesis of the 60S ribosomal subunit. The sequence is that of Ribosome biogenesis protein BRX1 homolog (brix1) from Xenopus laevis (African clawed frog).